Reading from the N-terminus, the 182-residue chain is Dynactin subunit 5 (182 aa).

M1 is modified (N-acetylmethionine).

It belongs to the dynactin subunits 5/6 family. Dynactin subunit 5 subfamily. Subunit of dynactin, a multiprotein complex part of a tripartite complex with dynein and a adapter, such as BICDL1, BICD2 or HOOK3. The dynactin complex is built around ACTR1A/ACTB filament and consists of an actin-related filament composed of a shoulder domain, a pointed end and a barbed end. Its length is defined by its flexible shoulder domain. The soulder is composed of 2 DCTN1 subunits, 4 DCTN2 and 2 DCTN3. The 4 DCNT2 (via N-terminus) bind the ACTR1A filament and act as molecular rulers to determine the length. The pointed end is important for binding dynein-dynactin cargo adapters. Consists of 4 subunits: ACTR10, DCNT4, DCTN5 and DCTN6. Within the complex DCTN6 forms a heterodimer with DCTN5. The barbed end is composed of a CAPZA1:CAPZB heterodimers, which binds ACTR1A/ACTB filament and dynactin and stabilizes dynactin. Interacts with N4BP2L1.

It is found in the cytoplasm. Its subcellular location is the cytoskeleton. The protein localises to the chromosome. The protein resides in the centromere. It localises to the kinetochore. In terms of biological role, part of the dynactin complex that activates the molecular motor dynein for ultra-processive transport along microtubules. This chain is Dynactin subunit 5 (DCTN5), found in Pongo abelii (Sumatran orangutan).